We begin with the raw amino-acid sequence, 225 residues long: PKHD-type hydroxylase YbiX (225 aa).

The 100-residue stretch at 78-177 folds into the Fe2OG dioxygenase domain; sequence TLSTPLFNRY…RVASFMWIQS (100 aa). Positions 96, 98, and 158 each coordinate Fe cation. Arg-168 is a binding site for 2-oxoglutarate.

Fe(2+) is required as a cofactor. The cofactor is L-ascorbate.

In Escherichia coli (strain SMS-3-5 / SECEC), this protein is PKHD-type hydroxylase YbiX.